Here is a 159-residue protein sequence, read N- to C-terminus: Transcription elongation factor GreA (159 aa).

A coiled-coil region spans residues 43–75 (LSENAEYDAAREEQSQLEAKIGEIENKLASATI).

This sequence belongs to the GreA/GreB family.

In terms of biological role, necessary for efficient RNA polymerase transcription elongation past template-encoded arresting sites. The arresting sites in DNA have the property of trapping a certain fraction of elongating RNA polymerases that pass through, resulting in locked ternary complexes. Cleavage of the nascent transcript by cleavage factors such as GreA or GreB allows the resumption of elongation from the new 3'terminus. GreA releases sequences of 2 to 3 nucleotides. This chain is Transcription elongation factor GreA, found in Chlorobaculum tepidum (strain ATCC 49652 / DSM 12025 / NBRC 103806 / TLS) (Chlorobium tepidum).